The following is a 298-amino-acid chain: WRKY transcription factor 22 (298 aa).

Disordered regions lie at residues 75–116 and 181–220; these read EEPR…IQHK and AEHNHPAPTHRNSLAGSTRQKPSDQQTSKSPTTTIATYSS. A compositionally biased stretch (low complexity) spans 88-103; that stretch reads SLSASSGSVTSKPSGS. Positions 107-116 are enriched in basic residues; the sequence is RSKRRKIQHK. The segment at residues 122–188 is a DNA-binding region (WRKY); the sequence is AAEALNSDVW…YTAEHNHPAP (67 aa). Over residues 190-220 the composition is skewed to polar residues; that stretch reads HRNSLAGSTRQKPSDQQTSKSPTTTIATYSS.

It belongs to the WRKY group II-e family.

It is found in the nucleus. Functionally, transcription factor involved in the expression of defense genes in innate immune response of plants. Interacts specifically with the W box (5'-(T)TGAC[CT]-3'), a frequently occurring elicitor-responsive cis-acting element. Activates WRKY 29, SIRK and its own promoters. The sequence is that of WRKY transcription factor 22 (WRKY22) from Arabidopsis thaliana (Mouse-ear cress).